The chain runs to 318 residues: L-lactate dehydrogenase 1 (318 aa).

NAD(+)-binding positions include Val-17, Asp-38, Lys-43, Tyr-69, and 83–84; that span reads GA. Residues Gln-86, Arg-92, and 124 to 127 contribute to the substrate site; that span reads NPVD. Residues 122–124 and Ser-147 each bind NAD(+); that span reads ATN. Position 152–155 (152–155) interacts with substrate; that stretch reads DTGR. Positions 157 and 172 each coordinate beta-D-fructose 1,6-bisphosphate. The Proton acceptor role is filled by His-179. Tyr-224 bears the Phosphotyrosine mark. Position 233 (Thr-233) interacts with substrate.

It belongs to the LDH/MDH superfamily. LDH family. Homotetramer.

It is found in the cytoplasm. The enzyme catalyses (S)-lactate + NAD(+) = pyruvate + NADH + H(+). Its pathway is fermentation; pyruvate fermentation to lactate; (S)-lactate from pyruvate: step 1/1. Allosterically activated by fructose 1,6-bisphosphate (FBP). In terms of biological role, catalyzes the conversion of lactate to pyruvate. The polypeptide is L-lactate dehydrogenase 1 (Peribacillus psychrosaccharolyticus (Bacillus psychrosaccharolyticus)).